We begin with the raw amino-acid sequence, 120 residues long: MIF-like protein mif-2 (120 aa).

The protein belongs to the MIF family.

This Caenorhabditis elegans protein is MIF-like protein mif-2 (mif-2).